The following is a 128-amino-acid chain: Small ribosomal subunit protein eS8 (128 aa).

It belongs to the eukaryotic ribosomal protein eS8 family. As to quaternary structure, part of the 30S ribosomal subunit.

The polypeptide is Small ribosomal subunit protein eS8 (Methanococcus maripaludis (strain C6 / ATCC BAA-1332)).